The primary structure comprises 259 residues: MNILAPVRRDRVLAELPQCLRKEAALHGHKDFHPRVTCACQEHRTGTVGFKISKVIVVGDLSVGKTCLINRFCKDTFDKNYKATIGVDFEMERFEVLGIPFSLQLWDTAGQERFKCIASTYYRGAQAIIIVFNLNDVASLEHTKQWLADALKENDPSSVLLFLVGSKKDLSTPAQYALMEKDALQVAQEMKAEYWAVSSLTGENVREFFFRVAALTFEANVLAELEKSGARRIGDVVRINSDDSNLYLTASKKKPTCCP.

Met1 bears the N-acetylmethionine mark. Residues Ser62, Val63, Gly64, Lys65, Thr66, Asp78, Tyr81, and Thr84 each contribute to the GTP site. Thr66 is a Mg(2+) binding site. The Switch 1 signature appears at 71–89 (RFCKDTFDKNYKATIGVDF). Residues Thr84 and Asp107 each coordinate Mg(2+). The Switch 2 motif lies at 108–127 (TAGQERFKCIASTYYRGAQA). Positions 110, 167, 169, and 198 each coordinate GTP. Phosphoserine occurs at positions 241 and 244. 2 S-geranylgeranyl cysteine lipidation sites follow: Cys257 and Cys258.

Belongs to the small GTPase superfamily. Rab family. In terms of assembly, interacts with RILP. The GTP-bound form interacts with REP15. Mg(2+) serves as cofactor.

It localises to the cytoplasm. The protein resides in the golgi apparatus. The protein localises to the cytoplasmic vesicle. Its subcellular location is the phagosome. It is found in the phagosome membrane. It localises to the cell projection. The protein resides in the cilium. The protein localises to the cytoskeleton. Its subcellular location is the microtubule organizing center. It is found in the centrosome. It localises to the centriole. The enzyme catalyses GTP + H2O = GDP + phosphate + H(+). Regulated by guanine nucleotide exchange factors (GEFs) which promote the exchange of bound GDP for free GTP. Regulated by GTPase activating proteins (GAPs) which increase the GTP hydrolysis activity. Inhibited by GDP dissociation inhibitors (GDIs). In terms of biological role, the small GTPases Rab are key regulators of intracellular membrane trafficking, from the formation of transport vesicles to their fusion with membranes. Rabs cycle between an inactive GDP-bound form and an active GTP-bound form that is able to recruit to membranes different sets of downstream effectors directly responsible for vesicle formation, movement, tethering and fusion. RAB34 transports protein involved in the redistribution of lysosomes to the peri-Golgi region. Plays a role in the maturation of phagosomes that engulf pathogens, such as S.aureus and M.tuberculosis. Plays a role in the fusion of phagosomes with lysosomes. Involved in ciliogenesis. In particular, it is required for early steps of the intracellular cilium assembly pathway initiated by trafficking and docking of ciliary vesicles to the centrioles in the cytoplasm, followed by axoneme formation in the cytoplasm. After axoneme elongation, the centrioles migrate close to the cell surface so that ciliary vesicles can fuse with the plasma membrane to expose cilia to the extracellular space. It seems dispensable for ciliogenesis via the extracellular pathway where cilium assembly begins after migration and docking of the centriole to the plasma membrane. Also acts as a positive regulator of hedgehog signaling and regulates ciliary function. The protein is Ras-related protein Rab-34 of Homo sapiens (Human).